The following is a 126-amino-acid chain: DNA-directed RNA polymerase I subunit RPA12 (126 aa).

Residues Cys20, Cys23, Cys38, Cys41, Cys87, and Cys90 each contribute to the Zn(2+) site. The C4-type zinc finger occupies 20-41; the sequence is CSDCGSVLPLPGAQDTVTCTRC. A TFIIS-type zinc finger spans residues 83 to 123; it reads VDRRCPRCGHEGMAYHTRQMRSADEGQTVFYTCTNCKFQEK. A Hairpin motif is present at residues 106–107; sequence DE. Residues Cys115 and Cys118 each contribute to the Zn(2+) site.

Belongs to the archaeal RpoM/eukaryotic RPA12/RPB9/RPC11 RNA polymerase family. Component of the RNA polymerase I (Pol I) complex consisting of 13 subunits: a ten-subunit catalytic core composed of POLR1A/RPA1, POLR1B/RPA2, POLR1C/RPAC1, POLR1D/RPAC2, POLR1H/RPA12, POLR2E/RPABC1, POLR2F/RPABC2, POLR2H/RPABC3, POLR2K/RPABC4 and POLR2L/RPABC5; a mobile stalk subunit POLR1F/RPA43 protruding from the core and additional subunits homologous to general transcription factors POLR1E/RPA49 and POLR1G/RPA34. Part of Pol I pre-initiation complex (PIC), in which Pol I core assembles with RRN3 and promoter-bound UTBF and SL1/TIF-IB complex.

The protein localises to the nucleus. The protein resides in the nucleolus. Functionally, core component of RNA polymerase I (Pol I), a DNA-dependent RNA polymerase which synthesizes ribosomal RNA precursors using the four ribonucleoside triphosphates as substrates. Can mediate Pol I proofreading of the nascent RNA transcript. Anchors into the Pol I active site to monitor transcription fidelity and cleave mis-incorporated 5'-ribonucleotides. The protein is DNA-directed RNA polymerase I subunit RPA12 of Macaca mulatta (Rhesus macaque).